The following is a 346-amino-acid chain: tRNA N6-adenosine threonylcarbamoyltransferase (346 aa).

Fe cation contacts are provided by His110 and His114. Substrate contacts are provided by residues 132–136 (LLSGG), Asp165, Gly178, and Asn274. Residue Asp298 participates in Fe cation binding.

This sequence belongs to the KAE1 / TsaD family. Requires Fe(2+) as cofactor.

It localises to the cytoplasm. The catalysed reaction is L-threonylcarbamoyladenylate + adenosine(37) in tRNA = N(6)-L-threonylcarbamoyladenosine(37) in tRNA + AMP + H(+). Its function is as follows. Required for the formation of a threonylcarbamoyl group on adenosine at position 37 (t(6)A37) in tRNAs that read codons beginning with adenine. Is involved in the transfer of the threonylcarbamoyl moiety of threonylcarbamoyl-AMP (TC-AMP) to the N6 group of A37, together with TsaE and TsaB. TsaD likely plays a direct catalytic role in this reaction. The polypeptide is tRNA N6-adenosine threonylcarbamoyltransferase (Borreliella burgdorferi (strain ATCC 35210 / DSM 4680 / CIP 102532 / B31) (Borrelia burgdorferi)).